A 610-amino-acid chain; its full sequence is Elongation factor 4 (610 aa).

Positions 11 to 193 (EKIRNFSIIA…QIVEKVPAPT (183 aa)) constitute a tr-type G domain. GTP is bound by residues 23-28 (DHGKST) and 140-143 (NKID).

This sequence belongs to the TRAFAC class translation factor GTPase superfamily. Classic translation factor GTPase family. LepA subfamily.

It localises to the cell membrane. The catalysed reaction is GTP + H2O = GDP + phosphate + H(+). Required for accurate and efficient protein synthesis under certain stress conditions. May act as a fidelity factor of the translation reaction, by catalyzing a one-codon backward translocation of tRNAs on improperly translocated ribosomes. Back-translocation proceeds from a post-translocation (POST) complex to a pre-translocation (PRE) complex, thus giving elongation factor G a second chance to translocate the tRNAs correctly. Binds to ribosomes in a GTP-dependent manner. The sequence is that of Elongation factor 4 from Streptococcus agalactiae serotype Ia (strain ATCC 27591 / A909 / CDC SS700).